The chain runs to 947 residues: Protein NLP8 (947 aa).

3 disordered regions span residues 114–135 (RSSA…ELSG), 509–533 (STKK…TTSS), and 550–591 (SMFS…EKNV). A compositionally biased stretch (basic and acidic residues) spans 126–135 (RSSDSDELSG). Polar residues-rich tracts occupy residues 522 to 533 (SDMSNFPQTTSS) and 550 to 572 (SMFS…TLEQ). Positions 573–587 (DVSKARTPEKKKSTT) are enriched in basic and acidic residues. In terms of domain architecture, RWP-RK spans 577–671 (ARTPEKKKST…LDSVQGVEGG (95 aa)). A coiled-coil region spans residues 646 to 666 (RKINKVNRSLRKIQTVLDSVQ). The span at 805–815 (SCSISDSSNGS) shows a compositional bias: low complexity. A disordered region spans residues 805–828 (SCSISDSSNGSGAVLRGSSSTSME). The region spanning 847–929 (TLIVKASYRE…HSVKFLVRDL (83 aa)) is the PB1 domain.

It is found in the nucleus. Probable transcription factor. This is Protein NLP8 (NLP8) from Arabidopsis thaliana (Mouse-ear cress).